Consider the following 61-residue polypeptide: uncharacterized protein (61 aa).

This is an uncharacterized protein from Treponema pallidum (strain Nichols).